The chain runs to 404 residues: Propionate kinase (404 aa).

Belongs to the acetokinase family. PduW subfamily.

It localises to the cytoplasm. It catalyses the reaction propanoate + ATP = propanoyl phosphate + ADP. Its pathway is polyol metabolism; 1,2-propanediol degradation. In terms of biological role, works with phosphate acetyltransferase (pta) to capture exogenous propionate and regenerate propionyl-CoA during degradation of 1,2-propanediol (1,2-PD). Expression of a cosmid containing the full 21-gene pdu operon in E.coli allows E.coli to grow on 1,2-propanediol (1,2-PD) with the appearance of bacterial microcompartments (BMC) in its cytoplasm. The protein is Propionate kinase of Citrobacter freundii.